A 384-amino-acid polypeptide reads, in one-letter code: Transcriptional regulator of the unfolded protein response hacA (384 aa).

Residues 1–18 (MTESTFAVETFSMDSMSP) are compositionally biased toward polar residues. 2 disordered regions span residues 1–27 (MTES…IPRL) and 41–94 (LVPE…QRRI). A compositionally biased stretch (basic and acidic residues) spans 84-94 (KTEDEKEQRRI). The bZIP domain maps to 90-153 (EQRRIERVLR…NRLSQQVAKL (64 aa)). Residues 92-101 (RRIERVLRNR) form a basic motif region. The tract at residues 106-113 (ISRERKRL) is leucine-zipper. Disordered stretches follow at residues 208–256 (SIPF…PSDL) and 331–384 (PDED…AGAQ). Residues 218–240 (STTTTTTTTTTTSNNISSTSSTT) are compositionally biased toward low complexity.

It belongs to the bZIP family.

It is found in the nucleus. Functionally, master transcriptional regulator of the unfolded protein response (UPR) that recognizes and binds to the UPR element (UPRE) in the promoter of UPR-regulated genes. Exposure to antifungals and ER-stressing agents initiates the activation of hacA which occurs when a 20 nucleotide fragment is removed from part of the exon-2 and part of intron-2, which in turn promotes the arisen of the DNA binding site motif and a dimer interface domain. Modulates the expression of genes related to cell wall synthesis, ergosterol biosynthesis, pigmentation, heat shock proteins, and the genes coding for mannosyltransferase enzymes. Plays a key role in both response to stress and host-pathogen interaction. This chain is Transcriptional regulator of the unfolded protein response hacA, found in Trichophyton rubrum (strain ATCC MYA-4607 / CBS 118892) (Athlete's foot fungus).